The chain runs to 322 residues: Protein IRREGULAR XYLEM 15 (322 aa).

The chain crosses the membrane as a helical span at residues 28-48 (LWLLAFVSFFTIVFLLTLLYT).

As to expression, expressed in rosette leaves, stems and siliques. Expressed in the xylem.

It localises to the golgi apparatus membrane. In terms of biological role, required for xylan biosynthesis, but not directly involved in catalyzing the addition of sugars to the growing polymer. The sequence is that of Protein IRREGULAR XYLEM 15 (IRX15) from Arabidopsis thaliana (Mouse-ear cress).